The sequence spans 486 residues: Membrane-bound lytic murein transglycosylase F (486 aa).

An N-terminal signal peptide occupies residues 1–26 (MFSPMALRPRCAKWLIVTGLFLMLGA). The interval 27–267 (CVEKPSTLER…RLKDRYYGHV (241 aa)) is non-LT domain. The segment at 268–486 (DVLGYVGAYT…TKPPEENPPL (219 aa)) is LT domain. Residue Glu-314 is part of the active site. The segment at 464-486 (VAEGNLHVPGVNKTKPPEENPPL) is disordered.

In the N-terminal section; belongs to the bacterial solute-binding protein 3 family. The protein in the C-terminal section; belongs to the transglycosylase Slt family.

The protein localises to the cell outer membrane. The enzyme catalyses Exolytic cleavage of the (1-&gt;4)-beta-glycosidic linkage between N-acetylmuramic acid (MurNAc) and N-acetylglucosamine (GlcNAc) residues in peptidoglycan, from either the reducing or the non-reducing ends of the peptidoglycan chains, with concomitant formation of a 1,6-anhydrobond in the MurNAc residue.. In terms of biological role, murein-degrading enzyme that degrades murein glycan strands and insoluble, high-molecular weight murein sacculi, with the concomitant formation of a 1,6-anhydromuramoyl product. Lytic transglycosylases (LTs) play an integral role in the metabolism of the peptidoglycan (PG) sacculus. Their lytic action creates space within the PG sacculus to allow for its expansion as well as for the insertion of various structures such as secretion systems and flagella. In Pseudomonas fluorescens (strain ATCC BAA-477 / NRRL B-23932 / Pf-5), this protein is Membrane-bound lytic murein transglycosylase F.